Consider the following 101-residue polypeptide: UPF0235 protein SG2030 (101 aa).

The protein belongs to the UPF0235 family.

The chain is UPF0235 protein SG2030 from Sodalis glossinidius (strain morsitans).